A 447-amino-acid polypeptide reads, in one-letter code: Argininosuccinate lyase (447 aa).

The protein belongs to the lyase 1 family. Argininosuccinate lyase subfamily.

The protein resides in the cytoplasm. The enzyme catalyses 2-(N(omega)-L-arginino)succinate = fumarate + L-arginine. It participates in amino-acid biosynthesis; L-arginine biosynthesis; L-arginine from L-ornithine and carbamoyl phosphate: step 3/3. The protein is Argininosuccinate lyase of Bacteroides fragilis (strain YCH46).